We begin with the raw amino-acid sequence, 152 residues long: Inner membrane protein YbbJ (152 aa).

Residues 1-21 traverse the membrane as a helical segment; sequence MMELMVVHPHIFWLSLGGLLL. Over 22-31 the chain is Cytoplasmic; that stretch reads AAEMLGGNGY. A helical transmembrane segment spans residues 32 to 52; the sequence is LLWSGVAAVITGLVVWLVPLG. Topologically, residues 53-54 are periplasmic; sequence WE. A helical transmembrane segment spans residues 55–75; the sequence is WQGVMFAILTLLAAWLWWKWL. The Cytoplasmic segment spans residues 76 to 152; the sequence is SRRVREQKHS…ITLHIRAVSS (77 aa).

The protein to M.jannaschii MJ0826.

It localises to the cell inner membrane. The sequence is that of Inner membrane protein YbbJ (ybbJ) from Escherichia coli (strain K12).